Here is a 525-residue protein sequence, read N- to C-terminus: Cytochrome P450 750A1 (525 aa).

Residues 13 to 33 traverse the membrane as a helical segment; sequence PLPLPAILIATFIFFFSCWIL. Residue cysteine 465 coordinates heme.

The protein belongs to the cytochrome P450 family. Heme is required as a cofactor.

Its subcellular location is the membrane. The polypeptide is Cytochrome P450 750A1 (CYP750A1) (Pinus taeda (Loblolly pine)).